We begin with the raw amino-acid sequence, 92 residues long: Ribonuclease P protein component 1 (92 aa).

It belongs to the eukaryotic/archaeal RNase P protein component 1 family. Consists of a catalytic RNA component and at least 4-5 protein subunits.

The protein resides in the cytoplasm. It carries out the reaction Endonucleolytic cleavage of RNA, removing 5'-extranucleotides from tRNA precursor.. Its function is as follows. Part of ribonuclease P, a protein complex that generates mature tRNA molecules by cleaving their 5'-ends. The protein is Ribonuclease P protein component 1 of Desulfurococcus amylolyticus (strain DSM 18924 / JCM 16383 / VKM B-2413 / 1221n) (Desulfurococcus kamchatkensis).